The following is a 262-amino-acid chain: Sugar fermentation stimulation protein homolog (262 aa).

This sequence belongs to the SfsA family.

The sequence is that of Sugar fermentation stimulation protein homolog from Lawsonia intracellularis (strain PHE/MN1-00).